The primary structure comprises 1033 residues: DNA polymerase I A, chloroplastic (1033 aa).

Pro residues predominate over residues 1 to 11 (MAVAPPLPPAP). 2 disordered regions span residues 1-32 (MAVA…LSSP) and 104-142 (TNGT…PSNS). Residues 1-55 (MAVAPPLPPAPARQLRRWKGSSPRPPPWLSSPFRRTRYLSRPAFAAGGRQDYSPS) constitute a chloroplast transit peptide. The segment covering 115–124 (LRHDPSEDIR) has biased composition (basic and acidic residues). Residues 125–142 (SSNYPSLYNQRERGPSNS) show a composition bias toward polar residues. The 162-residue stretch at 321 to 482 (FGNGKTCIWV…LYESLKNKLE (162 aa)) folds into the 3'-5' exonuclease domain. Residues 696–1030 (CHAIAALCEV…VDAKYAKSWY (335 aa)) are polymerase.

It belongs to the DNA polymerase type-A family. As to expression, expressed in shoot apical meristem, root apical meristem, leaf primordia and the marginal meristem.

Its subcellular location is the plastid. The protein localises to the chloroplast. It carries out the reaction DNA(n) + a 2'-deoxyribonucleoside 5'-triphosphate = DNA(n+1) + diphosphate. Inhibited by dideoxythymidine-triphosphate (ddTTP), but not by aphidicolin and N-ethylmaleimide. In terms of biological role, in addition to polymerase activity, this DNA polymerase exhibits 5'-3' exonuclease activity. May be required for DNA replication and accumulation in plastids. The polypeptide is DNA polymerase I A, chloroplastic (Oryza sativa subsp. japonica (Rice)).